Consider the following 215-residue polypeptide: Ribosomal RNA small subunit methyltransferase G (215 aa).

S-adenosyl-L-methionine contacts are provided by residues glycine 78, leucine 83, 128–129 (AE), and arginine 146.

This sequence belongs to the methyltransferase superfamily. RNA methyltransferase RsmG family.

Its subcellular location is the cytoplasm. The catalysed reaction is guanosine(527) in 16S rRNA + S-adenosyl-L-methionine = N(7)-methylguanosine(527) in 16S rRNA + S-adenosyl-L-homocysteine. Specifically methylates the N7 position of guanine in position 527 of 16S rRNA. This Anaeromyxobacter dehalogenans (strain 2CP-1 / ATCC BAA-258) protein is Ribosomal RNA small subunit methyltransferase G.